Reading from the N-terminus, the 765-residue chain is Periplasmic beta-glucosidase (765 aa).

Positions 1-20 are cleaved as a signal peptide; sequence MKWLCSVGVAVSLAMQPALA. The active site involves aspartate 287.

This sequence belongs to the glycosyl hydrolase 3 family.

It localises to the periplasm. It carries out the reaction Hydrolysis of terminal, non-reducing beta-D-glucosyl residues with release of beta-D-glucose.. The polypeptide is Periplasmic beta-glucosidase (bglX) (Salmonella typhimurium (strain LT2 / SGSC1412 / ATCC 700720)).